Here is a 152-residue protein sequence, read N- to C-terminus: 3-hydroxyacyl-[acyl-carrier-protein] dehydratase FabZ (152 aa).

Histidine 54 is an active-site residue.

It belongs to the thioester dehydratase family. FabZ subfamily.

It is found in the cytoplasm. It carries out the reaction a (3R)-hydroxyacyl-[ACP] = a (2E)-enoyl-[ACP] + H2O. Involved in unsaturated fatty acids biosynthesis. Catalyzes the dehydration of short chain beta-hydroxyacyl-ACPs and long chain saturated and unsaturated beta-hydroxyacyl-ACPs. This Roseobacter denitrificans (strain ATCC 33942 / OCh 114) (Erythrobacter sp. (strain OCh 114)) protein is 3-hydroxyacyl-[acyl-carrier-protein] dehydratase FabZ.